Here is a 688-residue protein sequence, read N- to C-terminus: DNA ligase (688 aa).

Residues 38–42 (DEEYD), 87–88 (SL), and glutamate 118 each bind NAD(+). The active-site N6-AMP-lysine intermediate is the lysine 120. The NAD(+) site is built by arginine 141, glutamate 175, lysine 291, and lysine 315. The Zn(2+) site is built by cysteine 409, cysteine 412, cysteine 428, and cysteine 433. Positions 590–679 (VKLDILRGLT…AELKGYNFDE (90 aa)) constitute a BRCT domain.

It belongs to the NAD-dependent DNA ligase family. LigA subfamily. Requires Mg(2+) as cofactor. The cofactor is Mn(2+).

The enzyme catalyses NAD(+) + (deoxyribonucleotide)n-3'-hydroxyl + 5'-phospho-(deoxyribonucleotide)m = (deoxyribonucleotide)n+m + AMP + beta-nicotinamide D-nucleotide.. In terms of biological role, DNA ligase that catalyzes the formation of phosphodiester linkages between 5'-phosphoryl and 3'-hydroxyl groups in double-stranded DNA using NAD as a coenzyme and as the energy source for the reaction. It is essential for DNA replication and repair of damaged DNA. In Thermotoga maritima (strain ATCC 43589 / DSM 3109 / JCM 10099 / NBRC 100826 / MSB8), this protein is DNA ligase.